The sequence spans 469 residues: Cholesterol 7-desaturase nvd (469 aa).

Residues 1-25 (MASFCASKFLPGLLMLGLGLAVALA) form the signal peptide. The chain crosses the membrane as a helical span at residues 58–78 (NFVASQTLLTLTIFGVASFIL). In terms of domain architecture, Rieske spans 132 to 238 (IPLVASQDLV…VIEQNGFVLV (107 aa)). The [2Fe-2S] cluster site is built by Cys-172, His-174, Cys-192, and His-195.

Belongs to the cholesterol 7-desaturase family. [2Fe-2S] cluster serves as cofactor.

It localises to the membrane. The enzyme catalyses cholesterol + NADPH + O2 + H(+) = 7-dehydrocholesterol + NADP(+) + 2 H2O. It carries out the reaction cholesterol + NADH + O2 + H(+) = 7-dehydrocholesterol + NAD(+) + 2 H2O. Its pathway is steroid hormone biosynthesis; dafachronic acid biosynthesis. Catalyzes the production of 7-dehydrocholesterol (7-DHC or cholesta-5,7-dien-3beta-ol) by inserting a double bond (desaturating) at the C7-C8 single bond of cholesterol. Essential regulator of steroid biosynthesis as this reaction is the first step in the synthesis of the steroid hormone Delta(7)-dafachronic acid. This chain is Cholesterol 7-desaturase nvd, found in Hemicentrotus pulcherrimus (Sea urchin).